A 216-amino-acid polypeptide reads, in one-letter code: MPNRDYHAERREYGFAALRRADLQTDPFHQFSDWMETALEKTQQDATAMSVSTVSADGQPHSRIVLLKTFNSDGFIFYTHYDSDKGQQIDQNAKAALLFFWPELDRQIRIEGSLQKVPRETSEAYFHSRPKDSQLAASISNQSQPVASRDILEAKLQEAMSLPDRNLTCPAHWGGYQLKPCYFEFWQGRPSRLHDRFRYQRLSKNDQAWQITRLNP.

Residues 10–13 (RREY) and K68 contribute to the substrate site. Residues 63-68 (RIVLLK), 78-79 (YT), K85, and Q107 contribute to the FMN site. The substrate site is built by Y125, R129, and S133. Residues 142–143 (QS) and W186 each bind FMN. Residue 192–194 (RLH) participates in substrate binding. R196 contributes to the FMN binding site.

It belongs to the pyridoxamine 5'-phosphate oxidase family. Homodimer. It depends on FMN as a cofactor.

The catalysed reaction is pyridoxamine 5'-phosphate + O2 + H2O = pyridoxal 5'-phosphate + H2O2 + NH4(+). It catalyses the reaction pyridoxine 5'-phosphate + O2 = pyridoxal 5'-phosphate + H2O2. It functions in the pathway cofactor metabolism; pyridoxal 5'-phosphate salvage; pyridoxal 5'-phosphate from pyridoxamine 5'-phosphate: step 1/1. The protein operates within cofactor metabolism; pyridoxal 5'-phosphate salvage; pyridoxal 5'-phosphate from pyridoxine 5'-phosphate: step 1/1. Its function is as follows. Catalyzes the oxidation of either pyridoxine 5'-phosphate (PNP) or pyridoxamine 5'-phosphate (PMP) into pyridoxal 5'-phosphate (PLP). This chain is Pyridoxine/pyridoxamine 5'-phosphate oxidase 1, found in Hydrogenovibrio crunogenus (strain DSM 25203 / XCL-2) (Thiomicrospira crunogena).